The sequence spans 247 residues: Peroxisomal membrane protein 11A (247 aa).

Topologically, residues 1–83 (MDAFIRFTNQ…SVRATDLVPR (83 aa)) are cytoplasmic. Residues 84–105 (ICLTLASLNRVIYFICDTVLFV) traverse the membrane as a helical segment. Residues 106-219 (RSTGLASGVN…DQLGIYKSNP (114 aa)) are Lumenal-facing. Residues 220-239 (GIIGLGGLVSSVAGIITVAY) form a helical membrane-spanning segment. The segment at 220–239 (GIIGLGGLVSSVAGIITVAY) is required for homodimerization, interaction with PEX11G, and peroxisomal localization. The Cytoplasmic segment spans residues 240–247 (PQMKLKTQ).

It belongs to the peroxin-11 family. Homodimer. Heterodimer with PEX11G. Probably interacts with COPB2 and COPA. Interacts with PEX19. Interacts with FIS1.

It localises to the peroxisome membrane. May be involved in peroxisomal proliferation and may regulate peroxisomes division. May mediate binding of coatomer proteins to the peroxisomal membrane. Promotes membrane protrusion and elongation on the peroxisomal surface. In Bos taurus (Bovine), this protein is Peroxisomal membrane protein 11A (PEX11A).